Here is a 373-residue protein sequence, read N- to C-terminus: Saccharopine dehydrogenase [NAD(+), L-lysine-forming] (373 aa).

Ala-2 bears the N-acetylalanine; partial mark. Positions 18 and 77 each coordinate L-saccharopine. Lys-77 functions as the Proton acceptor in the catalytic mechanism. His-96 (proton donor) is an active-site residue. Gln-101 contributes to the L-saccharopine binding site. Arg-130 is a binding site for NAD(+). Positions 131 and 135 each coordinate L-saccharopine. NAD(+)-binding positions include 203-204, Asp-227, Thr-231, Tyr-251, and Val-278; that span reads GR. A disulfide bond links Cys-205 and Cys-249. 279-281 is an L-saccharopine binding site; the sequence is SAD. 318–321 provides a ligand contact to NAD(+); the sequence is IDHL. The Microbody targeting signal signature appears at 371–373; sequence SRL.

It belongs to the AlaDH/PNT family. In terms of assembly, monomer.

Its subcellular location is the peroxisome. It carries out the reaction L-saccharopine + NAD(+) + H2O = L-lysine + 2-oxoglutarate + NADH + H(+). It functions in the pathway amino-acid biosynthesis; L-lysine biosynthesis via AAA pathway; L-lysine from L-alpha-aminoadipate (fungal route): step 3/3. Inhibited by p-chloromercuribenzoate and iodoacetate by modification of the active site cysteine residue. Inhibited by diethyl pyrocarbonate by modification of histidine residues. Inhibited by pyridoxal 5'-phosphate by modification of an essential lysine residue. In terms of biological role, catalyzes the NAD(+)-dependent cleavage of saccharopine to L-lysine and 2-oxoglutarate, the final step in the alpha-aminoadipate (AAA) pathway for lysine biosynthesis. In Saccharomyces cerevisiae (strain ATCC 204508 / S288c) (Baker's yeast), this protein is Saccharopine dehydrogenase [NAD(+), L-lysine-forming].